The primary structure comprises 409 residues: Forkhead box protein A2 (409 aa).

The segment at residues 150-241 (AKPPYSYISL…GNMFENGCYL (92 aa)) is a DNA-binding region (fork-head). Positions 250 to 262 (DKKLSKDPSRKTS) are enriched in basic and acidic residues. Residues 250–315 (DKKLSKDPSR…AASPTSQAQH (66 aa)) form a disordered region. The segment covering 263–286 (EGGSNSSSESCNGNESPHSNSSSN) has biased composition (low complexity).

It is found in the nucleus. May play a crucial role in specification of both the axial mesendoderm and the ventral nervous system. The chain is Forkhead box protein A2 (foxa2) from Danio rerio (Zebrafish).